The following is a 386-amino-acid chain: Leupaxin (386 aa).

An N-acetylmethionine modification is found at methionine 1. The LD motif 1 motif lies at glutamate 3–threonine 15. Residues arginine 13–aspartate 41 form a disordered region. A Phosphoserine modification is found at serine 19. Position 22 is a phosphotyrosine (tyrosine 22). Position 54 is a phosphoserine (serine 54). Tyrosine 62 is modified (phosphotyrosine). 2 consecutive short sequence motifs (LD motif) follow at residues asparagine 70–proline 82 and glutamine 92–methionine 103. The residue at position 72 (tyrosine 72) is a Phosphotyrosine; by LYN. At serine 81 the chain carries Phosphoserine. 4 consecutive LIM zinc-binding domains span residues glycine 150–serine 208, proline 209–serine 267, proline 268–glycine 326, and threonine 327–leucine 386.

It belongs to the paxillin family. As to quaternary structure, interacts with PTPN22. Interacts with unphosphorylated ITGA4. Interacts with PTK2B/PYK2, PTPN12, AR and SRF. Interacts (via LD motif 3) with LYN and the interaction is induced upon B-cell antigen receptor (BCR) activation. Interacts (via LD motif 3) with PTK2/FAK. Phosphorylated on tyrosine residues. Phosphorylation on Tyr-72 is important for its inhibitory function. Bombesin stimulates phosphorylation on Tyr-22, Tyr-62 and Tyr-72. Macrophages, monocytes and osteoclasts (at protein level). Strongly expressed in cells and tissues of hematopoietic origin. Highest expression in lymphoid tissues such as spleen, lymph node, thymus and appendix and in the vascular smooth muscle. Lower levels in bone marrow and fetal liver. Also expressed in peripheral blood lymphocytes and a number of hematopoietic cell lines. Very low levels found in epithelial cell lines. Expressed in prostate cancer (PCa) cells and its expression intensity is directly linked to PCa progression.

The protein localises to the cytoplasm. The protein resides in the cell junction. It localises to the focal adhesion. Its subcellular location is the nucleus. It is found in the perinuclear region. The protein localises to the cell projection. The protein resides in the podosome. It localises to the cell membrane. In terms of biological role, transcriptional coactivator for androgen receptor (AR) and serum response factor (SRF). Contributes to the regulation of cell adhesion, spreading and cell migration and acts as a negative regulator in integrin-mediated cell adhesion events. Suppresses the integrin-induced tyrosine phosphorylation of paxillin (PXN). May play a critical role as an adapter protein in the formation of the adhesion zone in osteoclasts. Negatively regulates B-cell antigen receptor (BCR) signaling. In Homo sapiens (Human), this protein is Leupaxin (LPXN).